A 257-amino-acid polypeptide reads, in one-letter code: UPF0246 protein BF3795 (257 aa).

Belongs to the UPF0246 family.

The protein is UPF0246 protein BF3795 of Bacteroides fragilis (strain ATCC 25285 / DSM 2151 / CCUG 4856 / JCM 11019 / LMG 10263 / NCTC 9343 / Onslow / VPI 2553 / EN-2).